A 434-amino-acid polypeptide reads, in one-letter code: Chaperone SurA (434 aa).

An N-terminal signal peptide occupies residues 1 to 22 (MKPSKHLIFALFALAISQPTMA). PpiC domains are found at residues 173–274 (DVEY…KIMD) and 283–383 (IEEV…QLEE).

The protein localises to the periplasm. It catalyses the reaction [protein]-peptidylproline (omega=180) = [protein]-peptidylproline (omega=0). Chaperone involved in the correct folding and assembly of outer membrane proteins. Recognizes specific patterns of aromatic residues and the orientation of their side chains, which are found more frequently in integral outer membrane proteins. May act in both early periplasmic and late outer membrane-associated steps of protein maturation. The protein is Chaperone SurA of Shewanella sp. (strain MR-7).